We begin with the raw amino-acid sequence, 90 residues long: NAD(P)H-quinone oxidoreductase subunit H, chloroplastic (90 aa).

The protein belongs to the complex I 49 kDa subunit family. As to quaternary structure, NDH is composed of at least 16 different subunits, 5 of which are encoded in the nucleus.

It localises to the plastid. The protein localises to the chloroplast thylakoid membrane. The catalysed reaction is a plastoquinone + NADH + (n+1) H(+)(in) = a plastoquinol + NAD(+) + n H(+)(out). It catalyses the reaction a plastoquinone + NADPH + (n+1) H(+)(in) = a plastoquinol + NADP(+) + n H(+)(out). Its function is as follows. NDH shuttles electrons from NAD(P)H:plastoquinone, via FMN and iron-sulfur (Fe-S) centers, to quinones in the photosynthetic chain and possibly in a chloroplast respiratory chain. The immediate electron acceptor for the enzyme in this species is believed to be plastoquinone. Couples the redox reaction to proton translocation, and thus conserves the redox energy in a proton gradient. The polypeptide is NAD(P)H-quinone oxidoreductase subunit H, chloroplastic (ndhH) (Secale cereale (Rye)).